The following is a 40-amino-acid chain: Beta-defensin 2 (40 aa).

3 disulfides stabilise this stretch: cysteine 7/cysteine 36, cysteine 14/cysteine 29, and cysteine 19/cysteine 37.

This sequence belongs to the beta-defensin family. As to expression, neutrophilic granules.

It localises to the secreted. In terms of biological role, has bactericidal activity. Active against E.coli ML35 and S.aureus 502A. The protein is Beta-defensin 2 (DEFB2) of Bos taurus (Bovine).